The sequence spans 138 residues: Acidic phospholipase A2 homolog sistruxin A (138 aa).

Residues 1-37 (MRALWIVAVLLLGVEGSLVEFETLIMKIAGRSGVWYY) form the signal peptide. Disulfide bonds link C42/C131, C44/C60, C59/C111, C65/C138, C66/C104, C73/C97, and C91/C102. A propeptide spanning residues 78–83 (DVYTYR) is cleaved from the precursor. A Pyrrolidone carboxylic acid modification is found at Q84. Residues 119 to 124 (YNHKYW) constitute a propeptide that is removed on maturation.

This sequence belongs to the phospholipase A2 family. Group II subfamily. D49 sub-subfamily. As to quaternary structure, heterodimer of an acidic subunit and a basic chain. The acidic subunit is non-toxic, without enzymatic activity and comprises 3 peptides that are cross-linked by 7 disulfide bridges. The basic subunit is toxic, has phospholipase A2 activity and is composed of a single chain. Expressed by the venom gland.

The protein localises to the secreted. In terms of biological role, snake venom phospholipase A2 (PLA2) that inhibits neuromuscular transmission by blocking acetylcholine release from the nerve termini. In Sistrurus tergeminus (Western massasauga), this protein is Acidic phospholipase A2 homolog sistruxin A.